We begin with the raw amino-acid sequence, 63 residues long: uncharacterized protein (63 aa).

This is an uncharacterized protein from Azospirillum brasilense.